Here is a 166-residue protein sequence, read N- to C-terminus: MKVLFLTANEFEDVELIYPYHRLKEEGHEVYIASFERGTITGKHGYSVKVDLTFDKVNPEEFDALVLPGGRAPERVRLNEKAVSIARKMFSEGKPVASICHGPQILISAGVLRGRKGTSYPGIKDDMINAGVEWVDAEVVVDGNWVSSRVPADLYAWMREFVKLLK.

Positions 1–166 (MKVLFLTANE…WMREFVKLLK (166 aa)) constitute a PfpI endopeptidase domain. The active-site Nucleophile is cysteine 100. Histidine 101 is an active-site residue.

It belongs to the peptidase C56 family. In terms of assembly, homohexamer formed by a dimer of trimers that assemble into a hollow ring structure.

It localises to the cytoplasm. The enzyme catalyses N(omega)-(1-hydroxy-2-oxopropyl)-L-arginyl-[protein] + H2O = lactate + L-arginyl-[protein] + H(+). The catalysed reaction is N(6)-(1-hydroxy-2-oxopropyl)-L-lysyl-[protein] + H2O = lactate + L-lysyl-[protein] + H(+). It catalyses the reaction S-(1-hydroxy-2-oxopropyl)-L-cysteinyl-[protein] + H2O = lactate + L-cysteinyl-[protein] + H(+). It carries out the reaction N(omega)-(1-hydroxy-2-oxoethyl)-L-arginyl-[protein] + H2O = L-arginyl-[protein] + glycolate + H(+). The enzyme catalyses N(6)-(1-hydroxy-2-oxoethyl)-L-lysyl-[protein] + H2O = glycolate + L-lysyl-[protein] + H(+). The catalysed reaction is S-(1-hydroxy-2-oxoethyl)-L-cysteinyl-[protein] + H2O = glycolate + L-cysteinyl-[protein] + H(+). In terms of biological role, deglycase that catalyzes the deglycation of the Maillard adducts formed between amino groups of proteins and reactive carbonyl groups of glyoxals. Thus, functions as a protein deglycase that repairs methylglyoxal- and glyoxal-glycated proteins, and releases repaired proteins and lactate or glycolate, respectively. Deglycates cysteine, arginine and lysine residues in proteins, and thus reactivates these proteins by reversing glycation by glyoxals. Acts on early glycation intermediates (hemithioacetals and aminocarbinols), preventing the formation of advanced glycation endproducts (AGE) that cause irreversible damage. Also displays proteolytic activity. This Pyrococcus horikoshii (strain ATCC 700860 / DSM 12428 / JCM 9974 / NBRC 100139 / OT-3) protein is Deglycase PH1704.